The following is a 721-amino-acid chain: Homeobox-leucine zipper protein HDG2 (721 aa).

The interval 17–70 (NNHNYNHEDNNNEGFLRDDEFDSPNTKSGSENQEGGSGNDQDPLHPNKKKRYHR) is disordered. A compositionally biased stretch (basic and acidic residues) spans 21–34 (YNHEDNNNEGFLRD). A DNA-binding region (homeobox) is located at residues 64–123 (KKKRYHRHTQLQIQEMEAFFKECPHPDDKQRKQLSRELNLEPLQVKFWFQNKRTQMKNHH). Residues 120–194 (KNHHERHENS…DRISAIAAKY (75 aa)) are a coiled coil. The START domain occupies 242 to 468 (TESDKPVIID…LDRQCERLAS (227 aa)).

It belongs to the HD-ZIP homeobox family. Class IV subfamily. In terms of assembly, interacts with AIL7/PLT7, ANT, BBM and AIL1. As to expression, expressed in hairless cell files of the hypocotyl epidermis. Expressed in shoot apical meristem (SAM) with higher levels in L1 cells and the epidermal layer of young leaves. Expressed in primary root tips, in the L1 of apical inflorescence meristems, early flower primordia, carpel epidermis, ovule primordia, nucellus, chalaze and seed coat.

The protein localises to the nucleus. Functionally, probable transcription factor. Involved, together with PDF2, in the regulation of flower organs development by promoting the expression of APETALA 3 (AP3) in the epidermis and internal cell layers of developing flowers. The protein is Homeobox-leucine zipper protein HDG2 of Arabidopsis thaliana (Mouse-ear cress).